The following is a 312-amino-acid chain: DNA-directed RNA polymerase subunit alpha (312 aa).

Positions 1–226 (MIEFEKPIIT…EHLNLFTDLT (226 aa)) are alpha N-terminal domain (alpha-NTD). An alpha C-terminal domain (alpha-CTD) region spans residues 242 to 312 (NDEKLLDRTI…DLGLGLKNDK (71 aa)).

Belongs to the RNA polymerase alpha chain family. In terms of assembly, homodimer. The RNAP catalytic core consists of 2 alpha, 1 beta, 1 beta' and 1 omega subunit. When a sigma factor is associated with the core the holoenzyme is formed, which can initiate transcription.

It carries out the reaction RNA(n) + a ribonucleoside 5'-triphosphate = RNA(n+1) + diphosphate. DNA-dependent RNA polymerase catalyzes the transcription of DNA into RNA using the four ribonucleoside triphosphates as substrates. The protein is DNA-directed RNA polymerase subunit alpha of Streptococcus thermophilus (strain CNRZ 1066).